Reading from the N-terminus, the 475-residue chain is Putative response regulator NtrX-like (475 aa).

A Response regulatory domain is found at 5–121; it reads DVLILDDEES…KLIILLKRAC (117 aa). Aspartate 54 is modified (4-aspartylphosphate). The Sigma-54 factor interaction domain occupies 143-369; sequence LVGGCSVTLK…LRNVVEWTLI (227 aa). Residues 171–178 and 232–241 each bind ATP; these read GKVGSGKE and ANNGTLYIDE.

Member of the two-component regulatory system RT0550/RT0603. The chain is Putative response regulator NtrX-like from Rickettsia typhi (strain ATCC VR-144 / Wilmington).